A 118-amino-acid chain; its full sequence is MQFSIIAISFLASLAMASPAKRGGGGGGSGSGSGSGSGSGSGGGSTTYTACSSTLYSEAQCCATDVLGVADLDCETVPETPTSASSFESICATSGRDAKCCTIPLLGQALLCQDPVGL.

The signal sequence occupies residues 1-22 (MQFSIIAISFLASLAMASPAKR). A disordered region spans residues 20–46 (AKRGGGGGGSGSGSGSGSGSGSGGGST). The segment covering 22 to 45 (RGGGGGGSGSGSGSGSGSGSGGGS) has biased composition (gly residues). 7 tandem repeats follow at residues 29–30 (SG), 31–32 (SG), 33–34 (SG), 35–36 (SG), 37–38 (SG), 39–40 (SG), and 41–42 (SG). A 7 X 2 AA tandem repeats of S-G region spans residues 29–42 (SGSGSGSGSGSGSG). Cystine bridges form between C51–C100, C61–C91, C62–C74, and C101–C112.

It belongs to the cerato-ulmin hydrophobin family. As to quaternary structure, homotetramer. Further self-assembles to form highly ordered films at water-air interfaces through intermolecular interactions.

The protein resides in the secreted. It localises to the cell wall. Its function is as follows. Aerial growth, conidiation, and dispersal of filamentous fungi in the environment rely upon a capability of their secreting small amphipathic proteins called hydrophobins (HPBs) with low sequence identity. Class I can self-assemble into an outermost layer of rodlet bundles on aerial cell surfaces, conferring cellular hydrophobicity that supports fungal growth, development and dispersal; whereas Class II form highly ordered films at water-air interfaces through intermolecular interactions but contribute nothing to the rodlet structure. Cryparin is a class II hydrophobin that is the most abundant protein produced by this fungus when grown in liquid culture and that plays an essential role in the fitness of this important plant pathogen by facilitating the eruption of the fungal fruiting bodies through the bark of its host tree. In Cryphonectria parasitica (Chestnut blight fungus), this protein is Class II hydrophobin CRP.